We begin with the raw amino-acid sequence, 197 residues long: Peptide deformylase (197 aa).

Fe cation is bound by residues Cys-106 and His-148. Glu-149 is a catalytic residue. Fe cation is bound at residue His-152.

Belongs to the polypeptide deformylase family. It depends on Fe(2+) as a cofactor.

The catalysed reaction is N-terminal N-formyl-L-methionyl-[peptide] + H2O = N-terminal L-methionyl-[peptide] + formate. Its function is as follows. Removes the formyl group from the N-terminal Met of newly synthesized proteins. Requires at least a dipeptide for an efficient rate of reaction. N-terminal L-methionine is a prerequisite for activity but the enzyme has broad specificity at other positions. The sequence is that of Peptide deformylase from Mycobacterium marinum (strain ATCC BAA-535 / M).